Reading from the N-terminus, the 985-residue chain is Eukaryotic translation initiation factor 4E transporter (985 aa).

A disordered region spans residues 1-24 (MDRRSMGETESGDAFLDLKKPPAS). At S5 the chain carries Phosphoserine. The YXXXXLphi motif signature appears at 30 to 36 (YTKEELL). Phosphoserine is present on residues S74, S78, S115, S120, S136, and S138. Residues 131–161 (VSSRRSGSPLEKDSDGLRLLGGRRIGSGRII) form an interaction with CSDE1 region. Residues 195–211 (RREFGDSKRVFGERRRN) carry the Nuclear localization signal motif. The interval 208 to 230 (RRRNDSYTEEEPEWFSAGPTSQS) is disordered. Residues 219–240 (PEWFSAGPTSQSETIELTGFDD) are interaction with DDX6. Residues S301, S345, S353, and S374 each carry the phosphoserine modification. K410 participates in a covalent cross-link: Glycyl lysine isopeptide (Lys-Gly) (interchain with G-Cter in SUMO2). S417 carries the phosphoserine modification. Positions 438-447 (VEAGLKGLKV) match the Nuclear export signal motif. Residues 448 to 490 (DQQVKNSTPFMAEHLEETLSAVTNNRQLKKDGDMTAFNKLVST) are interaction with LSM14A. The residue at position 486 (K486) is an N6-acetyllysine. 3 positions are modified to phosphoserine: S513, S564, and S587. The short motif at 613 to 638 (ITAQMSQLELQQAALEGLALPHDLAV) is the Nuclear export signal element. Disordered stretches follow at residues 664-693 (QQRV…SMLS) and 707-803 (ESKE…PTTP). At S693 the chain carries Phosphoserine. The interaction with PATL1 stretch occupies residues 695–713 (SFTPTSVIRKMYESKEKSK). Composition is skewed to basic and acidic residues over residues 707–717 (ESKEKSKEEPA) and 725–735 (DSKEDTQKASE). Residues 736 to 746 (ENLLSSSSVPS) show a composition bias toward low complexity. S752 is subject to Phosphoserine. Positions 754 to 776 (TTNSKLSALQRSSCSTPLSQANR) are enriched in polar residues. Phosphoserine is present on residues S920 and S951. Residues 922–953 (QTTPQNVPSRSGLPHMHSQLEHRPSQRSSSPV) form a disordered region. An interaction with LSM14A region spans residues 940 to 985 (QLEHRPSQRSSSPVGLAKWFGSDVLQQPLPSMPAKVISVDELEYRQ).

Belongs to the 4E-T/EIF4E-T family. As to quaternary structure, interacts (via YXXXXLphi motif) with EIF4E. Interacts (via YXXXXLphi motif) with EIF4E2. Interacts with DDX6. Interacts with CSDE1/UNR. Interacts with CNOT1; promoting association with the CCR4-NOT complex. Interacts with LSM14A; promoting EIF4ENIF1 localization to P-bodies. Interacts with PATL1. Interacts with importin beta only in the presence of importin alpha, suggesting a direct interaction with importin alpha. Interacts with APOBEC3G in an RNA-dependent manner. In terms of processing, phosphorylation by MAPK8/JNK1 and or MAPK9/JNK2 in response to oxidative stress promotes P-body assembly. Phosphorylated during meiotic maturation. As to expression, widely expressed.

It localises to the cytoplasm. The protein localises to the P-body. The protein resides in the nucleus. It is found in the PML body. Its subcellular location is the nucleus speckle. Its function is as follows. EIF4E-binding protein that regulates translation and stability of mRNAs in processing bodies (P-bodies). Plays a key role in P-bodies to coordinate the storage of translationally inactive mRNAs in the cytoplasm and prevent their degradation. Acts as a binding platform for multiple RNA-binding proteins: promotes deadenylation of mRNAs via its interaction with the CCR4-NOT complex, and blocks decapping via interaction with eIF4E (EIF4E and EIF4E2), thereby protecting deadenylated and repressed mRNAs from degradation. Component of a multiprotein complex that sequesters and represses translation of proneurogenic factors during neurogenesis. Promotes miRNA-mediated translational repression. Required for the formation of P-bodies. Involved in mRNA translational repression mediated by the miRNA effector TNRC6B by protecting TNRC6B-targeted mRNAs from decapping and subsequent decay. Also acts as a nucleoplasmic shuttling protein, which mediates the nuclear import of EIF4E and DDX6 by a piggy-back mechanism. The chain is Eukaryotic translation initiation factor 4E transporter from Homo sapiens (Human).